Here is a 432-residue protein sequence, read N- to C-terminus: C-type cytochrome OmcS (432 aa).

Residues 1–25 (MKKGMKVSLSVAAAALLMSAPAAFA) form the signal peptide.

It depends on heme as a cofactor.

It localises to the cell outer membrane. The protein resides in the cell surface. Plays an important role in extracellular electron transfer. Can transfer electrons to insoluble Fe(3+) oxides as well as other extracellular electron acceptors, including Mn(4+) oxide and humic substances. Essential for direct interspecies electron transfer (DIET) in cocultures with G.metallireducens. The chain is C-type cytochrome OmcS from Geobacter sulfurreducens (strain ATCC 51573 / DSM 12127 / PCA).